Here is a 635-residue protein sequence, read N- to C-terminus: Threonine--tRNA ligase (635 aa).

The editing domain stretch occupies residues Met1 to Pro144. A catalytic region spans residues Pro215 to Pro514. Zn(2+)-binding residues include Cys307, His359, and His483.

It belongs to the class-II aminoacyl-tRNA synthetase family. In terms of assembly, homodimer. The cofactor is Zn(2+).

It localises to the cytoplasm. The catalysed reaction is tRNA(Thr) + L-threonine + ATP = L-threonyl-tRNA(Thr) + AMP + diphosphate + H(+). Catalyzes the attachment of threonine to tRNA(Thr) in a two-step reaction: L-threonine is first activated by ATP to form Thr-AMP and then transferred to the acceptor end of tRNA(Thr). Also edits incorrectly charged L-seryl-tRNA(Thr). The polypeptide is Threonine--tRNA ligase (Methanococcoides burtonii (strain DSM 6242 / NBRC 107633 / OCM 468 / ACE-M)).